The primary structure comprises 528 residues: Oxamate amidohydrolase proenzyme (528 aa).

Thr342 serves as the catalytic Nucleophile. Substrate is bound at residue 424–425 (GG).

The protein belongs to the gamma-glutamyltransferase family. As to quaternary structure, heterodimer that consists of a 35.5 kDa large (alpha) subunit and a 20 kDa small (beta) subunit, which are synthesized from a single polypeptide. Post-translationally, cleaved by autocatalysis into a large (alpha) and a small (beta) subunit.

The catalysed reaction is oxamate + H2O = oxalate + NH4(+). In terms of biological role, involved in the uric acid degradation pathway. Catalyzes the conversion of oxamate to oxalate. The sequence is that of Oxamate amidohydrolase proenzyme from Klebsiella pneumoniae subsp. pneumoniae (strain ATCC 700721 / MGH 78578).